A 318-amino-acid chain; its full sequence is Ubiquitin-conjugating enzyme E2 J1 (318 aa).

Residues 1-282 are Cytoplasmic-facing; the sequence is METRYNLKSP…QGQPPRAHHT (282 aa). Residues 10 to 168 form the UBC core domain; sequence PAVKRLMKEA…VLLPLKSGSG (159 aa). Cys-91 functions as the Glycyl thioester intermediate in the catalytic mechanism. Residue Ser-184 is modified to Phosphoserine. A compositionally biased stretch (polar residues) spans 215-233; that stretch reads PTTFQGATASTSYGAQNPS. Residues 215–283 form a disordered region; sequence PTTFQGATAS…GQPPRAHHTE (69 aa). Over residues 249-269 the composition is skewed to low complexity; that stretch reads SMSPRQRRAQQQSQRRPSTSP. A phosphoserine mark is found at Ser-266 and Ser-268. The chain crosses the membrane as a helical; Anchor for type IV membrane protein span at residues 283-303; that stretch reads EHGGSAMLIIILTLALAALIF. The Lumenal portion of the chain corresponds to 304–318; that stretch reads RRIYLANEYIFDFEL.

The protein belongs to the ubiquitin-conjugating enzyme family. Component of the HRD1 complex, which comprises at least SYNV1/HRD1, DERL1/2, FAM8A1, HERPUD1/HERP, OS9, SEL1L and UBE2J1. Interacts with E3 ligase RNF26. Interacts with E3 ligase RNF133. Phosphorylated at Ser-184 in a cytosolic stress-dependent manner by MAP kinase p38 MAPKAPK2. In terms of processing, phosphorylated UBE2J1 is rapidly ubiquitinated and subsequently degraded by the proteasome.

It localises to the endoplasmic reticulum membrane. The enzyme catalyses S-ubiquitinyl-[E1 ubiquitin-activating enzyme]-L-cysteine + [E2 ubiquitin-conjugating enzyme]-L-cysteine = [E1 ubiquitin-activating enzyme]-L-cysteine + S-ubiquitinyl-[E2 ubiquitin-conjugating enzyme]-L-cysteine.. It functions in the pathway protein modification; protein ubiquitination. Catalyzes the covalent attachment of ubiquitin to other proteins. Functions in the selective degradation of misfolded membrane proteins from the endoplasmic reticulum (ERAD) and is essential for cells to recover from ER stress. Plays a role in MAPKAPK2-dependent translational control of TNF-alpha synthesis. Also acts as a platform for perinuclear positioning of the endosomal system by mediating ubiquitination of SQSTM1 through interaction with the E3 ubiquitin-protein ligase RNF26. Plays a role in male fecundity through the interaction with the E3 ubiquitin-protein ligase RNF133. This Mus musculus (Mouse) protein is Ubiquitin-conjugating enzyme E2 J1 (Ube2j1).